The following is a 133-amino-acid chain: Profilin-2 (133 aa).

This sequence belongs to the profilin family. In terms of assembly, occurs in many kinds of cells as a complex with monomeric actin in a 1:1 ratio.

The protein resides in the cytoplasm. The protein localises to the cytoskeleton. Binds to actin and affects the structure of the cytoskeleton. At high concentrations, profilin prevents the polymerization of actin, whereas it enhances it at low concentrations. By binding to PIP2, it inhibits the formation of IP3 and DG. This Artemisia vulgaris (Mugwort) protein is Profilin-2.